A 305-amino-acid polypeptide reads, in one-letter code: MNMQEVYEYLSTVLPEGHVKQDEMLKNHTHIKVGGKADVFVAPTNYDEIQEVIKYANKYNIPVTFLGNGSNVIIKDGGIRGITVSLIHITGVTVTGTTIVAQCGAAIIDVSRIALDHNLTGLEFACGIPGSVGGALYMNAGAYGGEISFVLTEAVVMTGDGELRTLTKEAFEFGYRKSVFANNHYIILEARFELEEGVHEEIKAKMDDLTFKRESKQPLEYPSCGSVFKRPPNNFAGKLIQDSGLQGKRIGGVEVSLKHAGFMVNVDNGTAQDYIDLIHFVQKTVEEKFGVKLEREVRIIGEDKE.

The FAD-binding PCMH-type domain occupies 33-197 (VGGKADVFVA…LEARFELEEG (165 aa)). R176 is a catalytic residue. The Proton donor role is filled by S226. Residue E296 is part of the active site.

The protein belongs to the MurB family. FAD is required as a cofactor.

It localises to the cytoplasm. The catalysed reaction is UDP-N-acetyl-alpha-D-muramate + NADP(+) = UDP-N-acetyl-3-O-(1-carboxyvinyl)-alpha-D-glucosamine + NADPH + H(+). It participates in cell wall biogenesis; peptidoglycan biosynthesis. Functionally, cell wall formation. This is UDP-N-acetylenolpyruvoylglucosamine reductase 2 from Bacillus cereus (strain ZK / E33L).